The sequence spans 184 residues: ATP synthase subunit delta (184 aa).

The protein belongs to the ATPase delta chain family. As to quaternary structure, F-type ATPases have 2 components, F(1) - the catalytic core - and F(0) - the membrane proton channel. F(1) has five subunits: alpha(3), beta(3), gamma(1), delta(1), epsilon(1). CF(0) has four main subunits: a(1), b(1), b'(1) and c(10-14). The alpha and beta chains form an alternating ring which encloses part of the gamma chain. F(1) is attached to F(0) by a central stalk formed by the gamma and epsilon chains, while a peripheral stalk is formed by the delta, b and b' chains.

The protein resides in the cellular thylakoid membrane. Its function is as follows. F(1)F(0) ATP synthase produces ATP from ADP in the presence of a proton or sodium gradient. F-type ATPases consist of two structural domains, F(1) containing the extramembraneous catalytic core and F(0) containing the membrane proton channel, linked together by a central stalk and a peripheral stalk. During catalysis, ATP synthesis in the catalytic domain of F(1) is coupled via a rotary mechanism of the central stalk subunits to proton translocation. This protein is part of the stalk that links CF(0) to CF(1). It either transmits conformational changes from CF(0) to CF(1) or is implicated in proton conduction. The polypeptide is ATP synthase subunit delta (Synechococcus sp. (strain PCC 6716)).